Here is a 132-residue protein sequence, read N- to C-terminus: Small ribosomal subunit protein uS8 (132 aa).

This sequence belongs to the universal ribosomal protein uS8 family. As to quaternary structure, part of the 30S ribosomal subunit. Contacts proteins S5 and S12.

Functionally, one of the primary rRNA binding proteins, it binds directly to 16S rRNA central domain where it helps coordinate assembly of the platform of the 30S subunit. The sequence is that of Small ribosomal subunit protein uS8 from Exiguobacterium sp. (strain ATCC BAA-1283 / AT1b).